We begin with the raw amino-acid sequence, 210 residues long: 7-carboxy-7-deazaguanine synthase (210 aa).

Residues 12 to 14 and arginine 27 each bind substrate; that span reads LQG. The Radical SAM core domain maps to 18–210; sequence QAGKAAVFCR…VQTHKYLGLP (193 aa). [4Fe-4S] cluster is bound by residues cysteine 31, cysteine 46, and cysteine 49. Residue threonine 51 participates in Mg(2+) binding. Position 90 (threonine 90) interacts with substrate. S-adenosyl-L-methionine contacts are provided by residues glycine 92, 133–135, and 173–176; these read SPK and QPMD. Proline 210 is a binding site for substrate.

It belongs to the radical SAM superfamily. 7-carboxy-7-deazaguanine synthase family. In terms of assembly, homodimer. It depends on [4Fe-4S] cluster as a cofactor. The cofactor is S-adenosyl-L-methionine. Mg(2+) serves as cofactor.

The catalysed reaction is 6-carboxy-5,6,7,8-tetrahydropterin + H(+) = 7-carboxy-7-deazaguanine + NH4(+). It participates in purine metabolism; 7-cyano-7-deazaguanine biosynthesis. In terms of biological role, catalyzes the complex heterocyclic radical-mediated conversion of 6-carboxy-5,6,7,8-tetrahydropterin (CPH4) to 7-carboxy-7-deazaguanine (CDG), a step common to the biosynthetic pathways of all 7-deazapurine-containing compounds. The protein is 7-carboxy-7-deazaguanine synthase of Caulobacter vibrioides (strain ATCC 19089 / CIP 103742 / CB 15) (Caulobacter crescentus).